The sequence spans 197 residues: Fe/S biogenesis protein NfuA (197 aa).

Positions 155 and 158 each coordinate [4Fe-4S] cluster.

This sequence belongs to the NfuA family. Homodimer. The cofactor is [4Fe-4S] cluster.

Involved in iron-sulfur cluster biogenesis. Binds a 4Fe-4S cluster, can transfer this cluster to apoproteins, and thereby intervenes in the maturation of Fe/S proteins. Could also act as a scaffold/chaperone for damaged Fe/S proteins. The polypeptide is Fe/S biogenesis protein NfuA (Pseudomonas savastanoi pv. phaseolicola (strain 1448A / Race 6) (Pseudomonas syringae pv. phaseolicola (strain 1448A / Race 6))).